Reading from the N-terminus, the 327-residue chain is Alkene monooxygenase system, ferredoxin--NAD(+) reductase component (327 aa).

The 89-residue stretch at 1–89 folds into the 2Fe-2S ferredoxin-type domain; it reads MRLNDGRSFS…DLEINVRAGD (89 aa). [2Fe-2S] cluster contacts are provided by C32, C37, C40, and C73. Positions 96–194 constitute an FAD-binding FR-type domain; the sequence is PRRHAARVTV…EGPYGRAYLR (99 aa).

It belongs to the bacterial ring-hydroxylating dioxygenase ferredoxin reductase family. In terms of assembly, monomer. The alkene monooxygenase multicomponent enzyme system is composed of an electron transfer component and a monooxygenase component interacting with the effector protein XamoD. The electron transfer component is composed of a ferredoxin reductase (XamoF) and a ferredoxin (XamoC), and the monooxygenase component is formed by a heterohexamer (dimer of heterotrimers) of two alpha subunits (XamoA), two beta subunits (XamoE) and two gamma subunits (XamoB). FAD serves as cofactor. The cofactor is [2Fe-2S] cluster.

Its subcellular location is the cytoplasm. It catalyses the reaction 2 reduced [2Fe-2S]-[ferredoxin] + NAD(+) + H(+) = 2 oxidized [2Fe-2S]-[ferredoxin] + NADH. Its function is as follows. Reductase component of the alkene monooxygenase multicomponent enzyme system which catalyzes the O2- and NADH-dependent epoxidation of short chain (C2 to C6) alkenes to their corresponding epoxides. Ferredoxin reductase catalyzes the transfer of electrons from NADH to ferredoxin (XamoC). NADPH is also effective but with a rate approximately 3-fold lower than with NADH. This Xanthobacter autotrophicus (strain ATCC BAA-1158 / Py2) protein is Alkene monooxygenase system, ferredoxin--NAD(+) reductase component.